A 356-amino-acid polypeptide reads, in one-letter code: Alanine racemase, catabolic (356 aa).

K35 functions as the Proton acceptor; specific for D-alanine in the catalytic mechanism. An N6-(pyridoxal phosphate)lysine modification is found at K35. Substrate is bound at residue R130. The Proton acceptor; specific for L-alanine role is filled by Y253. M301 is a substrate binding site.

Belongs to the alanine racemase family. Requires pyridoxal 5'-phosphate as cofactor.

The catalysed reaction is L-alanine = D-alanine. In terms of biological role, isomerizes L-alanine to D-alanine which is then oxidized to pyruvate by DadA. This chain is Alanine racemase, catabolic (dadX), found in Salmonella typhi.